Here is a 262-residue protein sequence, read N- to C-terminus: Carbonic anhydrase 13 (262 aa).

An Alpha-carbonic anhydrase domain is found at 4-261 (LSWGYGEHNG…LKGRRVRASF (258 aa)). The Proton donor/acceptor role is filled by His-65. Residues His-95, His-97, and His-120 each contribute to the Zn(2+) site. 200 to 201 (TV) is a binding site for substrate.

This sequence belongs to the alpha-carbonic anhydrase family. Zn(2+) is required as a cofactor. As to expression, expressed in spleen, lung, kidney, heart, brain, skeletal muscle and testis.

It carries out the reaction hydrogencarbonate + H(+) = CO2 + H2O. Inhibited by coumarins, sulfonamide derivatives such as acetazolamide (AZA) and Foscarnet (phosphonoformate trisodium salt). Its function is as follows. Reversible hydration of carbon dioxide. This chain is Carbonic anhydrase 13 (Ca13), found in Mus musculus (Mouse).